Reading from the N-terminus, the 508-residue chain is 2,3-bisphosphoglycerate-independent phosphoglycerate mutase (508 aa).

Residues aspartate 11 and serine 61 each coordinate Mn(2+). The active-site Phosphoserine intermediate is the serine 61. Residues histidine 122, 150-151 (RD), arginine 182, arginine 188, 257-260 (RPDR), and lysine 332 contribute to the substrate site. 5 residues coordinate Mn(2+): aspartate 397, histidine 401, aspartate 438, histidine 439, and histidine 456.

It belongs to the BPG-independent phosphoglycerate mutase family. In terms of assembly, monomer. Mn(2+) is required as a cofactor.

It catalyses the reaction (2R)-2-phosphoglycerate = (2R)-3-phosphoglycerate. Its pathway is carbohydrate degradation; glycolysis; pyruvate from D-glyceraldehyde 3-phosphate: step 3/5. Its function is as follows. Catalyzes the interconversion of 2-phosphoglycerate and 3-phosphoglycerate. The chain is 2,3-bisphosphoglycerate-independent phosphoglycerate mutase from Mycoplasma pneumoniae (strain ATCC 29342 / M129 / Subtype 1) (Mycoplasmoides pneumoniae).